A 635-amino-acid chain; its full sequence is Biosynthetic arginine decarboxylase (635 aa).

Position 100 is an N6-(pyridoxal phosphate)lysine (Lys100). Position 282–292 (282–292 (VDIGGGLGVDY)) interacts with substrate.

This sequence belongs to the Orn/Lys/Arg decarboxylase class-II family. SpeA subfamily. The cofactor is Mg(2+). It depends on pyridoxal 5'-phosphate as a cofactor.

It carries out the reaction L-arginine + H(+) = agmatine + CO2. It participates in amine and polyamine biosynthesis; agmatine biosynthesis; agmatine from L-arginine: step 1/1. Catalyzes the biosynthesis of agmatine from arginine. The polypeptide is Biosynthetic arginine decarboxylase (Geobacter metallireducens (strain ATCC 53774 / DSM 7210 / GS-15)).